The following is a 635-amino-acid chain: Putative adagio-like protein 2 (635 aa).

Positions 1-25 (MEWDSDSEGSGDEEEEEEEEEEEGV) are enriched in acidic residues. The segment at 1 to 32 (MEWDSDSEGSGDEEEEEEEEEEEGVEVGGGGD) is disordered. One can recognise a PAS domain in the interval 44 to 123 (ALAIEGVLGA…TDIRRCLEEG (80 aa)). Position 91 is an S-4a-FMN cysteine (Cys91). The 47-residue stretch at 209–255 (SDLFLLSDEVLCQKILSRLSPRDIASVNSVCKRLYHLTRNDDLWRMV) folds into the F-box domain. Kelch repeat units lie at residues 371-421 (RLVL…TLDG), 423-474 (KLVV…VYDG), 476-530 (KILM…PPPR), and 542-594 (RILI…VVGG).

Belongs to the ADAGIO family. Post-translationally, FMN binds covalently to cysteine after exposure to blue light and is reversed in the dark.

It localises to the nucleus. It participates in protein modification; protein ubiquitination. Its function is as follows. Component of an E3 ubiquitin ligase complex that plays a central role in blue light-dependent circadian cycles. Acts as a blue light photoreceptor, due to the presence of FMN, that mediates light-regulated protein degradation of critical clock components by targeting them to the proteasome complex. This is Putative adagio-like protein 2 from Oryza sativa subsp. japonica (Rice).